The following is a 79-amino-acid chain: Conotoxin Vi6.1 (79 aa).

The signal sequence occupies residues 1–22; it reads MKLTCVLIITVLFLTASQLITA. Positions 23-47 are excised as a propeptide; that stretch reads DYSRDQRQYRAVRLGDEMRNFKGAR. 3 disulfides stabilise this stretch: C49-C62, C56-C67, and C61-C77. P60 and P63 each carry 4-hydroxyproline.

As to expression, expressed by the venom duct.

It is found in the secreted. Functionally, ion channel inhibitor that inhibits the increase in intracellular calcium upon depolarization in DRG neurons. In vivo, both intraperitoneal and intracranial injections into mice induce hyperactivity. The sequence is that of Conotoxin Vi6.1 from Conus virgo (Virgin cone).